The chain runs to 292 residues: Calcium-binding protein CBP (292 aa).

The segment at 1 to 80 (MAGYPPNPGS…YGSGGGYGAP (80 aa)) is disordered. Over residues 12–21 (YPYGGAGGYG) the composition is skewed to gly residues. Positions 22–40 (APPPPYGSSPAPSAPPYGA) are enriched in pro residues. 2 EF-hand domains span residues 121-156 (GTDPNVVACFQAADRDGSGMIDDKELQSALSGYSQS) and 187-222 (YSLQNWRSIFERFDRDRSGKIDATELRDALLSLGYS). Residues aspartate 134, aspartate 136, serine 138, methionine 140, glutamate 145, aspartate 200, aspartate 202, serine 204, lysine 206, and glutamate 211 each coordinate Ca(2+).

Its function is as follows. Potential calcium sensor. The chain is Calcium-binding protein CBP from Oryza sativa subsp. japonica (Rice).